The primary structure comprises 427 residues: Rhodocoxin reductase (427 aa).

2–34 serves as a coordination point for FAD; that stretch reads SIVIIGSGQAGFEAAVSLRSHGFSGTITLVGDE. An NAD(+)-binding site is contributed by 144 to 172; the sequence is SLVVIGAGFIGLEVAAAARKKGLDVTVVE.

Belongs to the FAD-dependent oxidoreductase family. It depends on FAD as a cofactor.

Its function is as follows. The degradation of the thiocarbamate herbicide EPTC by cytochrome CYP116 (thcB) requires the participation of a flavoprotein, rhodocoxin reductase, and an iron-sulfur protein, rhodocoxin, to mediate the transfer of electrons from NADH to P450 for oxygen activation. The protein is Rhodocoxin reductase (thcD) of Rhodococcus erythropolis (Arthrobacter picolinophilus).